The following is a 1575-amino-acid chain: Ras GTPase-activating-like protein IQGAP2 (1575 aa).

The residue at position 16 (S16) is a Phosphoserine. Positions 41–156 (LCHLEEAKRW…YCIHALSLYL (116 aa)) constitute a Calponin-homology (CH) domain. Position 356 is a phosphothreonine (T356). The region spanning 594–627 (VSSDGSWLKLNLHKKYDYYYNTDSKESSWVTPES) is the WW domain. Phosphoserine occurs at positions 595, 599, and 685. 3 IQ domains span residues 690–719 (QEENVVKIQAFWKGYKQRKEYMHRRQTFID), 720–749 (NTDSIVKIQSWFRMATARKSYLSRLQYFRD), and 750–779 (HNNEIVKIQSLLRANKARDDYKTLVGSENP). A Phosphothreonine modification is found at T716. A phosphothreonine mark is found at T782, T881, T1002, and T1269. The region spanning 933 to 1182 (YLLLKLFKTA…QEFRKYFKEA (250 aa)) is the Ras-GAP domain. S1271, S1279, S1358, and S1461 each carry phosphoserine.

In terms of tissue distribution, isoform 2 expression is enhanced in testis.

Its function is as follows. Binds to activated CDC42 and RAC1 but does not seem to stimulate their GTPase activity. Associates with calmodulin. The sequence is that of Ras GTPase-activating-like protein IQGAP2 (IQGAP2) from Homo sapiens (Human).